Here is a 158-residue protein sequence, read N- to C-terminus: Transcription elongation factor GreA (158 aa).

This sequence belongs to the GreA/GreB family.

Necessary for efficient RNA polymerase transcription elongation past template-encoded arresting sites. The arresting sites in DNA have the property of trapping a certain fraction of elongating RNA polymerases that pass through, resulting in locked ternary complexes. Cleavage of the nascent transcript by cleavage factors such as GreA or GreB allows the resumption of elongation from the new 3'terminus. GreA releases sequences of 2 to 3 nucleotides. In Bacillus licheniformis (strain ATCC 14580 / DSM 13 / JCM 2505 / CCUG 7422 / NBRC 12200 / NCIMB 9375 / NCTC 10341 / NRRL NRS-1264 / Gibson 46), this protein is Transcription elongation factor GreA.